The following is a 964-amino-acid chain: Translation initiation factor IF-2 (964 aa).

Residues 26–375 (AAGVSKRSPE…QNNQHAFQAP (350 aa)) are disordered. Composition is skewed to basic and acidic residues over residues 49–60 (YLKRSHGAREDS), 91–103 (VRPD…EAPK), 118–154 (AKPE…KPEP), 174–206 (IAAR…ERRQ), 225–236 (PQREERRDDRRG), 243–252 (RGPRGNDNRG), and 328–339 (KGGERSWDDNKK). Positions 464-633 (PRSPVVTVMG…LLQAEVLELK (170 aa)) constitute a tr-type G domain. Residues 473 to 480 (GHVDHGKT) form a G1 region. A GTP-binding site is contributed by 473 to 480 (GHVDHGKT). A G2 region spans residues 498–502 (GITQH). The tract at residues 519-522 (DTPG) is G3. Residues 519–523 (DTPGH) and 573–576 (NKID) each bind GTP. The segment at 573 to 576 (NKID) is G4. Positions 609–611 (SAK) are G5.

Belongs to the TRAFAC class translation factor GTPase superfamily. Classic translation factor GTPase family. IF-2 subfamily.

The protein resides in the cytoplasm. Its function is as follows. One of the essential components for the initiation of protein synthesis. Protects formylmethionyl-tRNA from spontaneous hydrolysis and promotes its binding to the 30S ribosomal subunits. Also involved in the hydrolysis of GTP during the formation of the 70S ribosomal complex. The sequence is that of Translation initiation factor IF-2 from Chromobacterium violaceum (strain ATCC 12472 / DSM 30191 / JCM 1249 / CCUG 213 / NBRC 12614 / NCIMB 9131 / NCTC 9757 / MK).